A 220-amino-acid polypeptide reads, in one-letter code: Probable transcriptional regulator NRG2 (220 aa).

C2H2-type zinc fingers lie at residues 153 to 175 (HFCKICSTGFTTSGHLSRHNRIH) and 181 to 205 (HICPHEGCGQRFSRHDNCNQHYRTH).

It is found in the nucleus. In terms of biological role, transcriptional repressor. The polypeptide is Probable transcriptional regulator NRG2 (NRG2) (Saccharomyces cerevisiae (strain ATCC 204508 / S288c) (Baker's yeast)).